We begin with the raw amino-acid sequence, 257 residues long: Protein IMPACT homolog (257 aa).

The 94-residue stretch at 9–102 (AEIESLASIF…SLVQDFIRDL (94 aa)) folds into the RWD domain.

This sequence belongs to the IMPACT family. Interacts with gcn-1; prevents the interaction of gcn-1 with gcn-2 and inhibits gcn-2 kinase activity. Interaction with rpl-39; this interaction occurs in a gcn-1-independent manner. Associates with ribosomes; this interaction occurs in a gcn-1-independent manner. Associates with actin; this interaction occurs in a gcn-1-independent manner.

Its subcellular location is the cytoplasm. In terms of biological role, translational regulator that ensures constant high levels of translation under amino acid starvation. Plays a role as a negative regulator of the gcn-2 kinase activity; impairs gcn-1-mediated gcn-2 activation, and hence gcn-2-mediated eIF-2-alpha phosphorylation and subsequent down-regulation of protein synthesis in amino acid-starved cells. Plays a role in differentiation of neuronal cells by stimulating neurite outgrowth. The sequence is that of Protein IMPACT homolog from Caenorhabditis elegans.